Consider the following 136-residue polypeptide: S-protein homolog 6 (136 aa).

The first 17 residues, 1–17 (MFIIIFIVLISLIGCET), serve as a signal peptide directing secretion. Residues Asn76 and Asn108 are each glycosylated (N-linked (GlcNAc...) asparagine).

It belongs to the plant self-incompatibility (S1) protein family.

It is found in the secreted. This is S-protein homolog 6 from Arabidopsis thaliana (Mouse-ear cress).